Consider the following 111-residue polypeptide: Large ribosomal subunit protein eL31 (111 aa).

Belongs to the eukaryotic ribosomal protein eL31 family.

The sequence is that of Large ribosomal subunit protein eL31 (RPL31) from Tetrahymena thermophila (strain SB210).